The chain runs to 44 residues: MSDKPDVKEVESFDKTTLKKTTTNEKNTLPTKEVIEQEKSGGSD.

Over residues Met1–Thr17 the composition is skewed to basic and acidic residues. Residues Met1–Asp44 form a disordered region. A compositionally biased stretch (low complexity) spans Lys19 to Lys32. Over residues Glu33 to Asp44 the composition is skewed to basic and acidic residues.

It belongs to the thymosin beta family.

It localises to the cytoplasm. The protein localises to the cytoskeleton. Plays an important role in the organization of the cytoskeleton. Binds to and sequesters actin monomers (G actin) and therefore inhibits actin polymerization. The polypeptide is Thymosin beta (Gillichthys mirabilis (Long-jawed mudsucker)).